Reading from the N-terminus, the 231-residue chain is 2-phospho-L-lactate guanylyltransferase (231 aa).

It belongs to the CofC family. Homodimer.

It carries out the reaction (2S)-2-phospholactate + GTP + H(+) = (2S)-lactyl-2-diphospho-5'-guanosine + diphosphate. It functions in the pathway cofactor biosynthesis; coenzyme F420 biosynthesis. Guanylyltransferase that catalyzes the activation of (2S)-2-phospholactate (2-PL) as (2S)-lactyl-2-diphospho-5'-guanosine, via the condensation of 2-PL with GTP. It is involved in the biosynthesis of coenzyme F420, a hydride carrier cofactor. The protein is 2-phospho-L-lactate guanylyltransferase of Haloterrigena turkmenica (strain ATCC 51198 / DSM 5511 / JCM 9101 / NCIMB 13204 / VKM B-1734 / 4k) (Halococcus turkmenicus).